We begin with the raw amino-acid sequence, 268 residues long: Adenosylcobinamide-GDP ribazoletransferase (268 aa).

Transmembrane regions (helical) follow at residues 1-21 (MAGNLLNGLRAAIAFLTTLPV), 36-56 (YLFIPVAIVTGLLLGVAGTLF), 59-79 (ILPAPFAAVLTVACIFLLTGI), 112-132 (AGGLLFMAMDLLFLFALAMTF), 138-158 (WLFVPLLVAEGCAKVAQITII), 182-202 (LAAVIGAWIAIGIAIIGAAII), 212-232 (IMAGGLAMLSPLAVALIILII), and 244-264 (VIGAANEIARIAALGVMGAVL).

The protein belongs to the CobS family. Mg(2+) is required as a cofactor.

It localises to the cell membrane. It carries out the reaction alpha-ribazole + adenosylcob(III)inamide-GDP = adenosylcob(III)alamin + GMP + H(+). It catalyses the reaction alpha-ribazole 5'-phosphate + adenosylcob(III)inamide-GDP = adenosylcob(III)alamin 5'-phosphate + GMP + H(+). It functions in the pathway cofactor biosynthesis; adenosylcobalamin biosynthesis; adenosylcobalamin from cob(II)yrinate a,c-diamide: step 7/7. Joins adenosylcobinamide-GDP and alpha-ribazole to generate adenosylcobalamin (Ado-cobalamin). Also synthesizes adenosylcobalamin 5'-phosphate from adenosylcobinamide-GDP and alpha-ribazole 5'-phosphate. In Methanocella arvoryzae (strain DSM 22066 / NBRC 105507 / MRE50), this protein is Adenosylcobinamide-GDP ribazoletransferase.